The primary structure comprises 289 residues: Phosphatidylserine decarboxylase proenzyme (289 aa).

Active-site charge relay system; for autoendoproteolytic cleavage activity residues include D89, H146, and S252. S252 (schiff-base intermediate with substrate; via pyruvic acid; for decarboxylase activity) is an active-site residue. Pyruvic acid (Ser); by autocatalysis is present on S252.

Belongs to the phosphatidylserine decarboxylase family. PSD-B subfamily. Prokaryotic type I sub-subfamily. Heterodimer of a large membrane-associated beta subunit and a small pyruvoyl-containing alpha subunit. The cofactor is pyruvate. In terms of processing, is synthesized initially as an inactive proenzyme. Formation of the active enzyme involves a self-maturation process in which the active site pyruvoyl group is generated from an internal serine residue via an autocatalytic post-translational modification. Two non-identical subunits are generated from the proenzyme in this reaction, and the pyruvate is formed at the N-terminus of the alpha chain, which is derived from the carboxyl end of the proenzyme. The autoendoproteolytic cleavage occurs by a canonical serine protease mechanism, in which the side chain hydroxyl group of the serine supplies its oxygen atom to form the C-terminus of the beta chain, while the remainder of the serine residue undergoes an oxidative deamination to produce ammonia and the pyruvoyl prosthetic group on the alpha chain. During this reaction, the Ser that is part of the protease active site of the proenzyme becomes the pyruvoyl prosthetic group, which constitutes an essential element of the active site of the mature decarboxylase.

Its subcellular location is the cell membrane. It catalyses the reaction a 1,2-diacyl-sn-glycero-3-phospho-L-serine + H(+) = a 1,2-diacyl-sn-glycero-3-phosphoethanolamine + CO2. Its pathway is phospholipid metabolism; phosphatidylethanolamine biosynthesis; phosphatidylethanolamine from CDP-diacylglycerol: step 2/2. In terms of biological role, catalyzes the formation of phosphatidylethanolamine (PtdEtn) from phosphatidylserine (PtdSer). This chain is Phosphatidylserine decarboxylase proenzyme, found in Shewanella putrefaciens (strain CN-32 / ATCC BAA-453).